The primary structure comprises 171 residues: UPF0316 protein Exig_2248 (171 aa).

3 helical membrane passes run Ile4–Met24, Ile31–Val51, and Thr57–Val77.

Belongs to the UPF0316 family.

It localises to the cell membrane. This is UPF0316 protein Exig_2248 from Exiguobacterium sibiricum (strain DSM 17290 / CCUG 55495 / CIP 109462 / JCM 13490 / 255-15).